Reading from the N-terminus, the 118-residue chain is Large ribosomal subunit protein bL20 (118 aa).

It belongs to the bacterial ribosomal protein bL20 family.

Its function is as follows. Binds directly to 23S ribosomal RNA and is necessary for the in vitro assembly process of the 50S ribosomal subunit. It is not involved in the protein synthesizing functions of that subunit. The chain is Large ribosomal subunit protein bL20 from Erwinia tasmaniensis (strain DSM 17950 / CFBP 7177 / CIP 109463 / NCPPB 4357 / Et1/99).